Here is a 218-residue protein sequence, read N- to C-terminus: Large ribosomal subunit protein uL2c (218 aa).

The disordered stretch occupies residues 165–192; it reads GVVKNPVDHPHGGGEGRSPIGRSHPVTP.

Belongs to the universal ribosomal protein uL2 family. As to quaternary structure, part of the 50S ribosomal subunit.

It localises to the plastid. Its subcellular location is the chloroplast. The sequence is that of Large ribosomal subunit protein uL2c (rpl2) from Bigelowiella natans (Pedinomonas minutissima).